We begin with the raw amino-acid sequence, 196 residues long: ECF RNA polymerase sigma factor SigM (196 aa).

Positions 39–105 are sigma-70 factor domain-2; it reads LFRRHHRQLH…ACLDRLRRAK (67 aa). The Polymerase core binding motif lies at 63 to 66; that stretch reads DALQ. Positions 130 to 181 are sigma-70 factor domain-4; that stretch reads AVQRALMRLPVEQRAAVVAVDMQGYSIADTARMLGVAEGTVKSRCARARARL. The segment at residues 156 to 175 is a DNA-binding region (H-T-H motif); it reads IADTARMLGVAEGTVKSRCA.

The protein belongs to the sigma-70 factor family. ECF subfamily. In terms of assembly, interacts transiently with the RNA polymerase catalytic core formed by RpoA, RpoB, RpoC and RpoZ (2 alpha, 1 beta, 1 beta' and 1 omega subunit) to form the RNA polymerase holoenzyme that can initiate transcription. Interacts (via sigma-70 factor domain-4) with anti-sigma-M factor RsmA (AC L7N5D7).

Sigma factors are initiation factors that promote the attachment of RNA polymerase to specific initiation sites and are then released. Extracytoplasmic function (ECF) sigma factors are held in an inactive form by an anti-sigma factor (RsaM, AC L7N5D7) until released by regulated intramembrane proteolysis. This sigma factor is required for the synthesis of surface or secreted molecules. The sequence is that of ECF RNA polymerase sigma factor SigM (sigM) from Mycobacterium tuberculosis (strain ATCC 25618 / H37Rv).